A 456-amino-acid polypeptide reads, in one-letter code: Maturase-like protein 1 (456 aa).

It to group II intron maturases.

It localises to the plastid. Functionally, could be required for group III intron excision. The polypeptide is Maturase-like protein 1 (mat1) (Euglena longa (Euglenophycean alga)).